A 237-amino-acid polypeptide reads, in one-letter code: NADH-ubiquinone oxidoreductase assembly factor N7BML (237 aa).

A compositionally biased stretch (basic and acidic residues) spans 214-223; the sequence is VEKERDDSGK. Positions 214 to 237 are disordered; that stretch reads VEKERDDSGKPAEWTPKAAVRRRG.

Belongs to the complex I NDUFA12 subunit family.

It localises to the mitochondrion. Functionally, acts as an assembly factor of mitochondrial complex I. This is NADH-ubiquinone oxidoreductase assembly factor N7BML from Yarrowia lipolytica (strain CLIB 122 / E 150) (Yeast).